The sequence spans 461 residues: Bifunctional protein GlmU (461 aa).

Positions 1–229 (MEKYVVVLAA…FSESLGVNDR (229 aa)) are pyrophosphorylase. UDP-N-acetyl-alpha-D-glucosamine contacts are provided by residues 8 to 11 (LAAG), Lys22, Gln72, and 77 to 78 (GT). Residue Asp102 coordinates Mg(2+). UDP-N-acetyl-alpha-D-glucosamine is bound by residues Gly139, Glu154, Asn169, and Asn227. Asn227 is a Mg(2+) binding site. A linker region spans residues 230 to 250 (IALAEATRIMQRRINEGHMRD). The tract at residues 251 to 461 (GVTFIDPATA…LPLSEDEEWK (211 aa)) is N-acetyltransferase. Positions 332 and 350 each coordinate UDP-N-acetyl-alpha-D-glucosamine. His362 (proton acceptor) is an active-site residue. Residues Tyr365 and Asn376 each contribute to the UDP-N-acetyl-alpha-D-glucosamine site. Acetyl-CoA contacts are provided by Ala422 and Arg439.

It in the N-terminal section; belongs to the N-acetylglucosamine-1-phosphate uridyltransferase family. The protein in the C-terminal section; belongs to the transferase hexapeptide repeat family. Homotrimer. Mg(2+) is required as a cofactor.

The protein localises to the cytoplasm. The enzyme catalyses alpha-D-glucosamine 1-phosphate + acetyl-CoA = N-acetyl-alpha-D-glucosamine 1-phosphate + CoA + H(+). The catalysed reaction is N-acetyl-alpha-D-glucosamine 1-phosphate + UTP + H(+) = UDP-N-acetyl-alpha-D-glucosamine + diphosphate. It participates in nucleotide-sugar biosynthesis; UDP-N-acetyl-alpha-D-glucosamine biosynthesis; N-acetyl-alpha-D-glucosamine 1-phosphate from alpha-D-glucosamine 6-phosphate (route II): step 2/2. The protein operates within nucleotide-sugar biosynthesis; UDP-N-acetyl-alpha-D-glucosamine biosynthesis; UDP-N-acetyl-alpha-D-glucosamine from N-acetyl-alpha-D-glucosamine 1-phosphate: step 1/1. Its pathway is bacterial outer membrane biogenesis; LPS lipid A biosynthesis. In terms of biological role, catalyzes the last two sequential reactions in the de novo biosynthetic pathway for UDP-N-acetylglucosamine (UDP-GlcNAc). The C-terminal domain catalyzes the transfer of acetyl group from acetyl coenzyme A to glucosamine-1-phosphate (GlcN-1-P) to produce N-acetylglucosamine-1-phosphate (GlcNAc-1-P), which is converted into UDP-GlcNAc by the transfer of uridine 5-monophosphate (from uridine 5-triphosphate), a reaction catalyzed by the N-terminal domain. This chain is Bifunctional protein GlmU, found in Lactobacillus delbrueckii subsp. bulgaricus (strain ATCC BAA-365 / Lb-18).